Reading from the N-terminus, the 89-residue chain is Small ribosomal subunit protein uS15 (89 aa).

Belongs to the universal ribosomal protein uS15 family. Part of the 30S ribosomal subunit. Forms a bridge to the 50S subunit in the 70S ribosome, contacting the 23S rRNA.

One of the primary rRNA binding proteins, it binds directly to 16S rRNA where it helps nucleate assembly of the platform of the 30S subunit by binding and bridging several RNA helices of the 16S rRNA. Its function is as follows. Forms an intersubunit bridge (bridge B4) with the 23S rRNA of the 50S subunit in the ribosome. In Dechloromonas aromatica (strain RCB), this protein is Small ribosomal subunit protein uS15.